The following is a 345-amino-acid chain: S-adenosylmethionine:tRNA ribosyltransferase-isomerase (345 aa).

The protein belongs to the QueA family. In terms of assembly, monomer.

It is found in the cytoplasm. The catalysed reaction is 7-aminomethyl-7-carbaguanosine(34) in tRNA + S-adenosyl-L-methionine = epoxyqueuosine(34) in tRNA + adenine + L-methionine + 2 H(+). The protein operates within tRNA modification; tRNA-queuosine biosynthesis. Transfers and isomerizes the ribose moiety from AdoMet to the 7-aminomethyl group of 7-deazaguanine (preQ1-tRNA) to give epoxyqueuosine (oQ-tRNA). This is S-adenosylmethionine:tRNA ribosyltransferase-isomerase from Shewanella woodyi (strain ATCC 51908 / MS32).